Reading from the N-terminus, the 197-residue chain is Cell division protein SepF (197 aa).

Disordered regions lie at residues 38-72 (MPTP…TTPT) and 164-197 (LSRE…AQAQ). Residues 58–72 (TVASNFAMNSNTTPT) are compositionally biased toward polar residues. The span at 170-185 (PATPAAPARPAAPAPA) shows a compositional bias: low complexity.

The protein belongs to the SepF family. In terms of assembly, homodimer. Interacts with FtsZ.

Its subcellular location is the cytoplasm. In terms of biological role, cell division protein that is part of the divisome complex and is recruited early to the Z-ring. Probably stimulates Z-ring formation, perhaps through the cross-linking of FtsZ protofilaments. Its function overlaps with FtsA. The polypeptide is Cell division protein SepF (Picosynechococcus sp. (strain ATCC 27264 / PCC 7002 / PR-6) (Agmenellum quadruplicatum)).